The chain runs to 325 residues: Brain mitochondrial carrier protein 1 (325 aa).

6 consecutive transmembrane segments (helical) span residues 38 to 54, 112 to 128, 145 to 165, 199 to 215, 240 to 256, and 298 to 315; these read GLNW…SIVA, LRQA…YQSL, MICG…TDVL, GVVP…GVEL, VSSF…SNPV, and GFWP…IFFI. Solcar repeat units follow at residues 42-131, 139-224, and 233-323; these read KPFV…LKRL, ETLL…TKKH, and DTIL…LKRL.

It belongs to the mitochondrial carrier (TC 2.A.29) family. In terms of assembly, homotetramer. Mainly expressed in brain, particularly abundant in cortex, hippocampus thalamus, amygdala and hypothalamus. Highly expressed in heart and kidney, but not liver or lung (at protein level). In the nervous system, expressed in cortex, basal ganglia, substantia nigra, cerebellum, and spinal cord (at protein level).

The protein localises to the mitochondrion inner membrane. It catalyses the reaction sulfite(in) + sulfate(out) = sulfite(out) + sulfate(in). The enzyme catalyses thiosulfate(in) + sulfate(out) = thiosulfate(out) + sulfate(in). It carries out the reaction sulfate(out) + phosphate(in) = sulfate(in) + phosphate(out). The catalysed reaction is oxalate(in) + sulfate(out) = oxalate(out) + sulfate(in). It catalyses the reaction malonate(in) + sulfate(out) = malonate(out) + sulfate(in). The enzyme catalyses maleate(in) + sulfate(out) = maleate(out) + sulfate(in). It carries out the reaction (S)-malate(in) + sulfate(out) = (S)-malate(out) + sulfate(in). The catalysed reaction is (3S)-citramalate(in) + sulfate(out) = (3S)-citramalate(out) + sulfate(in). It catalyses the reaction (3R)-citramalate(in) + sulfate(out) = (3R)-citramalate(out) + sulfate(in). The enzyme catalyses sulfate(out) + succinate(in) = sulfate(in) + succinate(out). It carries out the reaction (S,S)-tartrate(in) + sulfate(out) = (S,S)-tartrate(out) + sulfate(in). The catalysed reaction is (2R,3R)-tartrate(in) + sulfate(out) = (2R,3R)-tartrate(out) + sulfate(in). It catalyses the reaction D-aspartate(in) + sulfate(out) = D-aspartate(out) + sulfate(in). The enzyme catalyses L-aspartate(in) + sulfate(out) = L-aspartate(out) + sulfate(in). It carries out the reaction sulfate(in) = sulfate(out). The catalysed reaction is phosphate(in) = phosphate(out). It catalyses the reaction (S)-malate(out) = (S)-malate(in). The enzyme catalyses citrate(in) = citrate(out). It carries out the reaction L-aspartate(out) = L-aspartate(in). The catalysed reaction is L-glutamate(out) = L-glutamate(in). It catalyses the reaction H(+)(in) = H(+)(out). The enzyme catalyses chloride(in) = chloride(out). Functionally, transports inorganic anions (sulfate, sulfite, thiosulfate and phosphate) and, to a lesser extent, a variety of dicarboxylates (e.g. malonate, malate and citramalate) and, even more so, aspartate and glutamate and tricarboxylates. May catalyze the export of sulfite and thiosulfate (the hydrogen sulfide degradation products) from the mitochondria, thereby modulating the level of the hydrogen sulfide. Also can mediate a very low unidirectional transport of anions including sulfate, phosphate, (S)-malate, citrate, L-aspartate and L-glutamate. Maintains oxidative balance (through uncoupling activities) and ATP production (by modifying mitochondrial membrane potential). Is able to transport protons across lipid membranes. Also exhibits transmembrane chloride transport activity to a lesser extent. May modify mitochondrial respiratory efficiency and mitochondrial oxidant production. This is Brain mitochondrial carrier protein 1 from Mus musculus (Mouse).